Here is a 470-residue protein sequence, read N- to C-terminus: MNPNQKIITIGSISIAIGIISLMLQIGNIISIWASHSIQTGSQNHTGICNQRIITYENSTWVNHTYVNINNTNVVAGKDKTSVTLAGNSSLCSISGWAIYTKDNSIRIGSKGDVFVIREPFISCSHLECKTFFLTQGALLNDKHSNGTVKDRSPYRALMSCPLGEAPSPYNSKFESVAWSASACHDGMGWLTIGISGPDNGAVAVLKYNGIITGTIKSWKKQILRTQESECVCMNGSCFTIMTDGPSNGAASYKIFKIEKGKVTKSIELNAPNFHYEECSCYPDTGTVMCVCRDNWHGSNRPWVSFNQNLDYQIGYICSGVFGDNPRPKDREGSCNPVTIDGADGVKGFSYKYGNGVWIGRTKSNRLRKGFEMIWDPNGWTNTDSDFSVKQDVVAITDWSGYSGSFVQHPELTGLDCIRPCFWVELVRGLPRENTTIWTSGSSISFCGVNSDTANWSWPDGAELPFTIDK.

The Intravirion portion of the chain corresponds to 1–6; that stretch reads MNPNQK. A helical membrane pass occupies residues 7-27; sequence IITIGSISIAIGIISLMLQIG. Residues 11-33 form an involved in apical transport and lipid raft association region; sequence GSISIAIGIISLMLQIGNIISIW. Over 28-470 the chain is Virion surface; the sequence is NIISIWASHS…GAELPFTIDK (443 aa). A hypervariable stalk region region spans residues 36-90; that stretch reads HSIQTGSQNHTGICNQRIITYENSTWVNHTYVNINNTNVVAGKDKTSVTLAGNSS. N-linked (GlcNAc...) asparagine; by host glycosylation is found at asparagine 44, asparagine 58, asparagine 63, asparagine 70, and asparagine 88. Positions 91 to 470 are head of neuraminidase; sequence LCSISGWAIY…GAELPFTIDK (380 aa). Cystine bridges form between cysteine 92–cysteine 417, cysteine 124–cysteine 129, cysteine 184–cysteine 231, cysteine 233–cysteine 238, cysteine 279–cysteine 292, cysteine 281–cysteine 290, cysteine 318–cysteine 335, and cysteine 421–cysteine 447. Position 118 (arginine 118) interacts with substrate. N-linked (GlcNAc...) asparagine; by host glycosylation occurs at asparagine 146. The active-site Proton donor/acceptor is the aspartate 151. A substrate-binding site is contributed by arginine 152. An N-linked (GlcNAc...) asparagine; by host glycan is attached at asparagine 235. A substrate-binding site is contributed by 277-278; sequence EE. Arginine 293 is a binding site for substrate. 3 residues coordinate Ca(2+): aspartate 294, glycine 298, and aspartate 324. Position 368 (arginine 368) interacts with substrate. Tyrosine 402 functions as the Nucleophile in the catalytic mechanism. 2 N-linked (GlcNAc...) asparagine; by host glycosylation sites follow: asparagine 434 and asparagine 455.

The protein belongs to the glycosyl hydrolase 34 family. In terms of assembly, homotetramer. The cofactor is Ca(2+). N-glycosylated.

The protein localises to the virion membrane. It is found in the host apical cell membrane. The catalysed reaction is Hydrolysis of alpha-(2-&gt;3)-, alpha-(2-&gt;6)-, alpha-(2-&gt;8)- glycosidic linkages of terminal sialic acid residues in oligosaccharides, glycoproteins, glycolipids, colominic acid and synthetic substrates.. Its activity is regulated as follows. Inhibited by the neuraminidase inhibitors zanamivir (Relenza) and oseltamivir (Tamiflu). These drugs interfere with the release of progeny virus from infected cells and are effective against all influenza strains. Resistance to neuraminidase inhibitors is quite rare. Catalyzes the removal of terminal sialic acid residues from viral and cellular glycoconjugates. Cleaves off the terminal sialic acids on the glycosylated HA during virus budding to facilitate virus release. Additionally helps virus spread through the circulation by further removing sialic acids from the cell surface. These cleavages prevent self-aggregation and ensure the efficient spread of the progeny virus from cell to cell. Otherwise, infection would be limited to one round of replication. Described as a receptor-destroying enzyme because it cleaves a terminal sialic acid from the cellular receptors. May facilitate viral invasion of the upper airways by cleaving the sialic acid moieties on the mucin of the airway epithelial cells. Likely to plays a role in the budding process through its association with lipid rafts during intracellular transport. May additionally display a raft-association independent effect on budding. Plays a role in the determination of host range restriction on replication and virulence. Sialidase activity in late endosome/lysosome traffic seems to enhance virus replication. This Influenza A virus (strain A/Russia:St.Petersburg/8/2006 H1N1) protein is Neuraminidase.